The sequence spans 191 residues: MTSTSKDTPESGYAVPPPNLFGVDFGLRLLLLASAVSALVVLVTSKQTESIPTSLPPPFPAFISRDAKFQHSPAFIYLLVALSVTCFYSIITMVASFAAITSPSSSPRMLFHLVLSDAVMAGVMASAAGTAGSVAYLGLKGNSHVNWNKVCNVYDKFCRHVGSSAAVSLVASVLLVSLVVLSSYSLYRRCR.

The Cytoplasmic segment spans residues 1–22; sequence MTSTSKDTPESGYAVPPPNLFG. The chain crosses the membrane as a helical span at residues 23-43; sequence VDFGLRLLLLASAVSALVVLV. The Extracellular portion of the chain corresponds to 44 to 73; that stretch reads TSKQTESIPTSLPPPFPAFISRDAKFQHSP. Residues 74–94 form a helical membrane-spanning segment; the sequence is AFIYLLVALSVTCFYSIITMV. At 95 to 118 the chain is on the cytoplasmic side; that stretch reads ASFAAITSPSSSPRMLFHLVLSDA. Residues 119–139 traverse the membrane as a helical segment; that stretch reads VMAGVMASAAGTAGSVAYLGL. Residues 140 to 160 are Extracellular-facing; that stretch reads KGNSHVNWNKVCNVYDKFCRH. A helical transmembrane segment spans residues 161-181; the sequence is VGSSAAVSLVASVLLVSLVVL. The Cytoplasmic segment spans residues 182-191; the sequence is SSYSLYRRCR.

It belongs to the Casparian strip membrane proteins (CASP) family. Homodimer and heterodimers.

It is found in the cell membrane. This Musa acuminata (Banana) protein is CASP-like protein 1D1.